The following is a 295-amino-acid chain: tRNA-cytidine(32) 2-sulfurtransferase (295 aa).

The short motif at Ser63–Ser68 is the PP-loop motif element. [4Fe-4S] cluster contacts are provided by Cys138, Cys141, and Cys229.

The protein belongs to the TtcA family. In terms of assembly, homodimer. It depends on Mg(2+) as a cofactor. [4Fe-4S] cluster serves as cofactor.

The protein resides in the cytoplasm. The catalysed reaction is cytidine(32) in tRNA + S-sulfanyl-L-cysteinyl-[cysteine desulfurase] + AH2 + ATP = 2-thiocytidine(32) in tRNA + L-cysteinyl-[cysteine desulfurase] + A + AMP + diphosphate + H(+). It participates in tRNA modification. Functionally, catalyzes the ATP-dependent 2-thiolation of cytidine in position 32 of tRNA, to form 2-thiocytidine (s(2)C32). The sulfur atoms are provided by the cysteine/cysteine desulfurase (IscS) system. This is tRNA-cytidine(32) 2-sulfurtransferase from Hyphomonas neptunium (strain ATCC 15444).